The chain runs to 330 residues: tRNA uridine(34) hydroxylase (330 aa).

The 95-residue stretch at 123–217 (SDPEVILVDT…YLEEVKQEES (95 aa)) folds into the Rhodanese domain. The Cysteine persulfide intermediate role is filled by Cys177.

This sequence belongs to the TrhO family.

It catalyses the reaction uridine(34) in tRNA + AH2 + O2 = 5-hydroxyuridine(34) in tRNA + A + H2O. Catalyzes oxygen-dependent 5-hydroxyuridine (ho5U) modification at position 34 in tRNAs. The sequence is that of tRNA uridine(34) hydroxylase from Shewanella sp. (strain ANA-3).